A 109-amino-acid chain; its full sequence is Nascent polypeptide-associated complex protein (109 aa).

An NAC-A/B domain is found at 3 to 70 (PMNPKQMKKM…YEVVKRPPKI (68 aa)).

This sequence belongs to the NAC-alpha family. In terms of assembly, homodimer. Interacts with the ribosome. Binds ribosomal RNA.

In terms of biological role, contacts the emerging nascent chain on the ribosome. This Archaeoglobus fulgidus (strain ATCC 49558 / DSM 4304 / JCM 9628 / NBRC 100126 / VC-16) protein is Nascent polypeptide-associated complex protein.